The sequence spans 329 residues: DNA-directed RNA polymerase subunit alpha (329 aa).

The interval 1 to 235 is alpha N-terminal domain (alpha-NTD); that stretch reads MQGSVTEFLK…EQLDAFVDLR (235 aa). The tract at residues 249 to 329 is alpha C-terminal domain (alpha-CTD); the sequence is FDPILLRPVD…NWPPASIAED (81 aa).

It belongs to the RNA polymerase alpha chain family. Homodimer. The RNAP catalytic core consists of 2 alpha, 1 beta, 1 beta' and 1 omega subunit. When a sigma factor is associated with the core the holoenzyme is formed, which can initiate transcription.

It carries out the reaction RNA(n) + a ribonucleoside 5'-triphosphate = RNA(n+1) + diphosphate. Functionally, DNA-dependent RNA polymerase catalyzes the transcription of DNA into RNA using the four ribonucleoside triphosphates as substrates. This chain is DNA-directed RNA polymerase subunit alpha, found in Photobacterium profundum (strain SS9).